Here is a 191-residue protein sequence, read N- to C-terminus: Orotate phosphoribosyltransferase (191 aa).

5-phospho-alpha-D-ribose 1-diphosphate is bound at residue 116–124 (EDVVTTGGS). The orotate site is built by threonine 120 and arginine 148.

This sequence belongs to the purine/pyrimidine phosphoribosyltransferase family. PyrE subfamily. In terms of assembly, homodimer. The cofactor is Mg(2+).

It catalyses the reaction orotidine 5'-phosphate + diphosphate = orotate + 5-phospho-alpha-D-ribose 1-diphosphate. Its pathway is pyrimidine metabolism; UMP biosynthesis via de novo pathway; UMP from orotate: step 1/2. Its function is as follows. Catalyzes the transfer of a ribosyl phosphate group from 5-phosphoribose 1-diphosphate to orotate, leading to the formation of orotidine monophosphate (OMP). The chain is Orotate phosphoribosyltransferase from Heliobacterium modesticaldum (strain ATCC 51547 / Ice1).